Consider the following 380-residue polypeptide: Transcription factor SOX-7 (380 aa).

A disordered region spans residues 24-43 (SDGLSPPAVPRPSGDKSSES). Residues 45 to 113 (IRRPMNAFMV…QHMQDYPNYK (69 aa)) constitute a DNA-binding region (HMG box). The interval 139–167 (SRDQNTLPEKNGIGRGEKEDRGEYSPGAT) is disordered. A Sox C-terminal domain is found at 260-380 (VSMMSSVSGC…ATYYNSYSVS (121 aa)). The interval 323–328 (EFDQYL) is required for beta-catenin-binding.

Interacts with CTNNB1/beta-catenin; this interaction may lead to the proteasomal degradation of active CTNNB1 and thus inhibition of Wnt/beta-catenin-stimulated transcription. As to expression, predominantly expressed in ovary, lung and heart. In the ovary, restricted to oocytes (at protein level). Present both in mesenchymal and epithelial cells in some adult tissues, including ear.

The protein localises to the nucleus. The protein resides in the cytoplasm. Binds to and activates the CDH5 promoter, hence plays a role in the transcriptional regulation of genes expressed in the hemogenic endothelium and blocks further differentiation into blood precursors. May be required for the survival of both hematopoietic and endothelial precursors during specification. May play a role in skeletal myogenesis and up-regulate the expression of muscle markers, such as PAX3/PAX7 and Meox1. Competes with GATA4 for binding and activation of the FGF3 promoter. Represses Wnt/beta-catenin-stimulated transcription. Probably acts by targeting CTNNB1 to proteasomal degradation. Binds the DNA sequence 5'-AACAAT-3'. This is Transcription factor SOX-7 (Sox7) from Mus musculus (Mouse).